The chain runs to 812 residues: DNA translocase FtsK 1 (812 aa).

The span at 1-11 (MTEKSHKKTAK) shows a compositional bias: basic residues. Residues 1–36 (MTEKSHKKTAKGRAGSPSPTSARNKKADNGARGNKV) form a disordered region. The segment covering 25-36 (KKADNGARGNKV) has biased composition (basic and acidic residues). Helical transmembrane passes span 63 to 83 (IGDALWLMGLAATLYLVISLI), 116 to 136 (VGYYLFGWSFWWWIAAACVML), 156 to 176 (IAAAALFVLTVFSPVLEYFVL), 184 to 204 (LPVGAGGMVGIRVGAVFAWLL), and 210 to 230 (LLIILVVLLLSLSLLVQISWL). The Cytoplasmic segment spans residues 231 to 812 (EFLNGAGRAV…RKILAHKDHL (582 aa)). Positions 461–670 (GTPVVGDLAK…FTVQSKIDSR (210 aa)) constitute a FtsK domain. An ATP-binding site is contributed by 481–486 (GSGKSV).

This sequence belongs to the FtsK/SpoIIIE/SftA family. As to quaternary structure, homohexamer. Forms a ring that surrounds DNA.

It localises to the cell inner membrane. Its function is as follows. Essential cell division protein that coordinates cell division and chromosome segregation. The N-terminus is involved in assembly of the cell-division machinery. The C-terminus functions as a DNA motor that moves dsDNA in an ATP-dependent manner towards the dif recombination site, which is located within the replication terminus region. Translocation stops specifically at Xer-dif sites, where FtsK interacts with the Xer recombinase, allowing activation of chromosome unlinking by recombination. FtsK orienting polar sequences (KOPS) guide the direction of DNA translocation. FtsK can remove proteins from DNA as it translocates, but translocation stops specifically at XerCD-dif site, thereby preventing removal of XerC and XerD from dif. The chain is DNA translocase FtsK 1 (ftsK1) from Neisseria meningitidis serogroup A / serotype 4A (strain DSM 15465 / Z2491).